Here is a 144-residue protein sequence, read N- to C-terminus: Bacilliredoxin BC_2157 (144 aa).

Belongs to the bacilliredoxin family.

The sequence is that of Bacilliredoxin BC_2157 from Bacillus cereus (strain ATCC 14579 / DSM 31 / CCUG 7414 / JCM 2152 / NBRC 15305 / NCIMB 9373 / NCTC 2599 / NRRL B-3711).